We begin with the raw amino-acid sequence, 524 residues long: Mediator of RNA polymerase II transcription subunit 8 (524 aa).

At Met1 the chain carries N-acetylmethionine. Positions Met137–Asp162 form a coiled coil. Disordered regions lie at residues Val291–Leu315 and Met474–Gln524. 2 stretches are compositionally biased toward low complexity: residues Gln295 to Leu315 and Met474 to Gln505. Over residues Ser506–Gln524 the composition is skewed to polar residues.

It belongs to the Mediator complex subunit 8 family. Component of the Mediator complex.

The protein localises to the nucleus. Component of the Mediator complex, a coactivator involved in the regulated transcription of nearly all RNA polymerase II-dependent genes. Mediator functions as a bridge to convey information from gene-specific regulatory proteins to the basal RNA polymerase II transcription machinery. The Mediator complex, having a compact conformation in its free form, is recruited to promoters by direct interactions with regulatory proteins and serves for the assembly of a functional preinitiation complex with RNA polymerase II and the general transcription factors. Regulator of both plant defense and flowering time. Involved in pollen tube growth. This chain is Mediator of RNA polymerase II transcription subunit 8 (MED8), found in Arabidopsis thaliana (Mouse-ear cress).